Consider the following 218-residue polypeptide: MTDTKIKGILGTKLGMTQVFDENNRVVPVTVVKAGPNVVTQIRTEERDGYSAVQLAFGAIDPRKVNKPTSGQFTKAGVTPRRHVVELRVADTSDYEVGQELTAEVFEDGAYVDVTGTSKGKGFAGTMKRHGFKGQGASHGTQAVHRRPGSIGGCATPGRVFKGMRMSGRMGSDRITTQNLSVHKVDAENGLLLIKGAIPGRKGGLVIVKSAVKGGARA.

The tract at residues 132–152 is disordered; it reads FKGQGASHGTQAVHRRPGSIG.

It belongs to the universal ribosomal protein uL3 family. In terms of assembly, part of the 50S ribosomal subunit. Forms a cluster with proteins L14 and L19.

In terms of biological role, one of the primary rRNA binding proteins, it binds directly near the 3'-end of the 23S rRNA, where it nucleates assembly of the 50S subunit. This is Large ribosomal subunit protein uL3 from Rhodococcus erythropolis (strain PR4 / NBRC 100887).